A 419-amino-acid chain; its full sequence is UPF0242 protein TC_0906 (419 aa).

This sequence belongs to the UPF0242 family.

This is UPF0242 protein TC_0906 from Chlamydia muridarum (strain MoPn / Nigg).